Reading from the N-terminus, the 212-residue chain is Ribonuclease HII (212 aa).

In terms of domain architecture, RNase H type-2 spans 2 to 206 (TPLVGVDEAG…CERIRAEAEQ (205 aa)). 3 residues coordinate a divalent metal cation: D8, E9, and D101.

It belongs to the RNase HII family. It depends on Mn(2+) as a cofactor. Requires Mg(2+) as cofactor.

Its subcellular location is the cytoplasm. The enzyme catalyses Endonucleolytic cleavage to 5'-phosphomonoester.. Its function is as follows. Endonuclease that specifically degrades the RNA of RNA-DNA hybrids. The polypeptide is Ribonuclease HII (Natronomonas pharaonis (strain ATCC 35678 / DSM 2160 / CIP 103997 / JCM 8858 / NBRC 14720 / NCIMB 2260 / Gabara) (Halobacterium pharaonis)).